The primary structure comprises 316 residues: 4-hydroxyphenylacetate decarboxylase activating enzyme (316 aa).

The Radical SAM core domain maps to 20–307; the sequence is HDGPGCRTTV…QDIFLDNGIA (288 aa). The [4Fe-4S] cluster site is built by Cys34, Cys38, Cys41, Cys60, Cys66, Cys69, and Cys105. 40 to 42 provides a ligand contact to S-adenosyl-L-methionine; the sequence is WCA. The region spanning 84 to 115 is the 4Fe-4S ferredoxin-type domain; the sequence is NKPVIDWNICKDCESFECVNSCYYNAFKLCAK. Residues Gly144, 193-195, and His267 each bind S-adenosyl-L-methionine; that span reads DIK.

The protein belongs to the organic radical-activating enzymes family. In terms of assembly, monomer. The cofactor is [4Fe-4S] cluster.

The enzyme catalyses glycyl-[protein] + reduced [flavodoxin] + S-adenosyl-L-methionine = glycin-2-yl radical-[protein] + semiquinone [flavodoxin] + 5'-deoxyadenosine + L-methionine + H(+). In terms of biological role, catalyzes activation of 4-hydroxyphenylacetate decarboxylase under anaerobic conditions by generation of an organic free radical on a glycine residue, via a homolytic cleavage of S-adenosyl-L-methionine (SAM). The sequence is that of 4-hydroxyphenylacetate decarboxylase activating enzyme from Clostridioides difficile (strain 630) (Peptoclostridium difficile).